Reading from the N-terminus, the 749-residue chain is Adenosylcobalamin-dependent ribonucleoside-triphosphate reductase (749 aa).

A disulfide bridge links C124 with C427. The tract at residues 152-163 is effector region-1; sequence SMPFSFMFDQLM. Residues 173-321 form an effector region-2 region; sequence TPNNVHQMPV…MGNMIGKTVV (149 aa). Catalysis depends on residues C416 and E418. Residues 573-634 form an adenosylcobalamin-binding-1 region; sequence FHYARYLIQR…EPAFASAGEV (62 aa). Residues 693–734 are adenosylcobalamin-binding-2; sequence FKQAPKEPIDAATYDAKCQEITADVAEKFAAMTGNHDQKDIE.

This sequence belongs to the class II ribonucleoside-triphosphate reductase family. As to quaternary structure, monomer. It depends on adenosylcob(III)alamin as a cofactor.

It carries out the reaction a 2'-deoxyribonucleoside 5'-triphosphate + [thioredoxin]-disulfide + H2O = a ribonucleoside 5'-triphosphate + [thioredoxin]-dithiol. Its activity is regulated as follows. Allosterically regulated by ATP and dNTP. The chain is Adenosylcobalamin-dependent ribonucleoside-triphosphate reductase (rtpR) from Levilactobacillus brevis (strain ATCC 367 / BCRC 12310 / CIP 105137 / JCM 1170 / LMG 11437 / NCIMB 947 / NCTC 947) (Lactobacillus brevis).